Reading from the N-terminus, the 71-residue chain is Large ribosomal subunit protein eL38 (71 aa).

Belongs to the eukaryotic ribosomal protein eL38 family.

The chain is Large ribosomal subunit protein eL38 (RpL38) from Argas monolakensis (Mono lake bird tick).